The sequence spans 504 residues: SPbeta prophage-derived uncharacterized protein YorI (504 aa).

This Bacillus subtilis (strain 168) protein is SPbeta prophage-derived uncharacterized protein YorI (yorI).